The primary structure comprises 360 residues: MTPTLRRKLEALAERREELERLLAEPDVVADNTRFRDLSREFAQLEPIATALADETRAKADLAAAEGMRADPDLRELADEEIAAAQARLQELEQELALLLVPRDPRDDGNLFLEVRAGTGGDEAAIFAGDLFRMYARYAERQGWKVEIESDNPGEHGGYKEVVARVVGRGAFSRLKFESGTHRVQRVPATESQGRIHTSAATVAIIPEADEVDDIVINPADLRVDTFRSSGAGGQHVNKTESAIRITHVPTGVVVECQTERSQHANRDKAMKRLKAQLLDAERQRQDAAQAESRRLQVGSGDRSQRIRTYNFPQGRITDHRVEGLTLYDLPNILAGDLDPLLQRLSHEHQVDALAQLSAG.

Gln235 bears the N5-methylglutamine mark. The tract at residues 281–310 (AERQRQDAAQAESRRLQVGSGDRSQRIRTY) is disordered.

Belongs to the prokaryotic/mitochondrial release factor family. Post-translationally, methylated by PrmC. Methylation increases the termination efficiency of RF1.

The protein resides in the cytoplasm. Its function is as follows. Peptide chain release factor 1 directs the termination of translation in response to the peptide chain termination codons UAG and UAA. The chain is Peptide chain release factor 1 from Stenotrophomonas maltophilia (strain R551-3).